Consider the following 80-residue polypeptide: Small ribosomal subunit protein bS18c (80 aa).

Positions 1–19 are enriched in basic residues; that stretch reads MKKFISRPKRSSRRRKKTP. Positions 1–24 are disordered; sequence MKKFISRPKRSSRRRKKTPIKPGE.

It belongs to the bacterial ribosomal protein bS18 family. Part of the 30S ribosomal subunit.

Its subcellular location is the plastid. It localises to the chloroplast. This is Small ribosomal subunit protein bS18c from Staurastrum punctulatum (Green alga).